The chain runs to 129 residues: Ribosome-binding factor A (129 aa).

The protein belongs to the RbfA family. Monomer. Binds 30S ribosomal subunits, but not 50S ribosomal subunits or 70S ribosomes.

Its subcellular location is the cytoplasm. One of several proteins that assist in the late maturation steps of the functional core of the 30S ribosomal subunit. Associates with free 30S ribosomal subunits (but not with 30S subunits that are part of 70S ribosomes or polysomes). Required for efficient processing of 16S rRNA. May interact with the 5'-terminal helix region of 16S rRNA. This is Ribosome-binding factor A from Marinomonas sp. (strain MWYL1).